A 521-amino-acid chain; its full sequence is Cytochrome P450 1A1 (521 aa).

Phe229 is a binding site for substrate. Residue Cys463 coordinates heme.

The protein belongs to the cytochrome P450 family. Heme is required as a cofactor.

The protein localises to the endoplasmic reticulum membrane. The protein resides in the microsome membrane. The catalysed reaction is an organic molecule + reduced [NADPH--hemoprotein reductase] + O2 = an alcohol + oxidized [NADPH--hemoprotein reductase] + H2O + H(+). Cytochromes P450 are a group of heme-thiolate monooxygenases. They oxidize a variety of structurally unrelated compounds, including steroids, fatty acids, and xenobiotics. The sequence is that of Cytochrome P450 1A1 (cyp1a1) from Oryzias latipes (Japanese rice fish).